We begin with the raw amino-acid sequence, 308 residues long: Testis-expressed protein 52 (308 aa).

As to expression, expressed in Testis.

The chain is Testis-expressed protein 52 from Mus musculus (Mouse).